We begin with the raw amino-acid sequence, 265 residues long: Thiamine thiazole synthase (265 aa).

NAD(+) is bound by residues Ala-43, 62-63, Gly-70, Val-134, and 162-164; these read ER and HVD. Fe cation contacts are provided by Asp-164 and His-179. Met-229 provides a ligand contact to NAD(+). Arg-239 serves as a coordination point for glycine.

It belongs to the THI4 family. As to quaternary structure, homooctamer; tetramer of dimers. Requires Fe(2+) as cofactor.

The catalysed reaction is hydrogen sulfide + glycine + NAD(+) = ADP-5-ethyl-4-methylthiazole-2-carboxylate + nicotinamide + 3 H2O + H(+). It participates in cofactor biosynthesis; thiamine diphosphate biosynthesis. Involved in the biosynthesis of the thiazole moiety of thiamine. Catalyzes the conversion of NAD and glycine to adenosine diphosphate 5-(2-hydroxyethyl)-4-methylthiazole-2-carboxylate (ADT), an adenylated thiazole intermediate, using free sulfide as a source of sulfur. The sequence is that of Thiamine thiazole synthase from Sulfolobus acidocaldarius (strain ATCC 33909 / DSM 639 / JCM 8929 / NBRC 15157 / NCIMB 11770).